The following is a 113-amino-acid chain: Phosphoribosyl-ATP pyrophosphatase (113 aa).

The protein belongs to the PRA-PH family.

It localises to the cytoplasm. It carries out the reaction 1-(5-phospho-beta-D-ribosyl)-ATP + H2O = 1-(5-phospho-beta-D-ribosyl)-5'-AMP + diphosphate + H(+). It functions in the pathway amino-acid biosynthesis; L-histidine biosynthesis; L-histidine from 5-phospho-alpha-D-ribose 1-diphosphate: step 2/9. This Janthinobacterium sp. (strain Marseille) (Minibacterium massiliensis) protein is Phosphoribosyl-ATP pyrophosphatase.